The following is a 325-amino-acid chain: Tetraacyldisaccharide 4'-kinase (325 aa).

55 to 62 (TAGGNGKT) is an ATP binding site.

It belongs to the LpxK family.

The enzyme catalyses a lipid A disaccharide + ATP = a lipid IVA + ADP + H(+). Its pathway is glycolipid biosynthesis; lipid IV(A) biosynthesis; lipid IV(A) from (3R)-3-hydroxytetradecanoyl-[acyl-carrier-protein] and UDP-N-acetyl-alpha-D-glucosamine: step 6/6. In terms of biological role, transfers the gamma-phosphate of ATP to the 4'-position of a tetraacyldisaccharide 1-phosphate intermediate (termed DS-1-P) to form tetraacyldisaccharide 1,4'-bis-phosphate (lipid IVA). The chain is Tetraacyldisaccharide 4'-kinase from Citrobacter koseri (strain ATCC BAA-895 / CDC 4225-83 / SGSC4696).